Consider the following 558-residue polypeptide: Phosphatidylserine lipase ABHD16A (558 aa).

Transmembrane regions (helical) follow at residues 60-80 and 93-113; these read ILAL…FAFF and VVPF…VACL. Residues 114-558 are Cytoplasmic-facing; that stretch reads RGIGRWTNPQ…AQNFQMPWHL (445 aa). The region spanning 281 to 407 is the AB hydrolase-1 domain; sequence LVICCEGNAG…LVTRTVRQHL (127 aa). Active-site charge relay system residues include S355, D430, and H507.

Belongs to the AB hydrolase superfamily. ABHD16 family.

Its subcellular location is the membrane. It carries out the reaction 1-heptadecanoyl-2-(5Z,8Z,11Z,14Z-eicosatetraenoyl)-sn-glycero-3-phosphoserine + H2O = 1-heptadecanoyl-sn-glycero-3-phosphoserine + (5Z,8Z,11Z,14Z)-eicosatetraenoate + H(+). It catalyses the reaction 1-hexadecanoyl-2-(9Z-octadecenoyl)-sn-glycero-3-phospho-L-serine + H2O = 1-hexadecanoyl-sn-glycero-3-phospho-L-serine + (9Z)-octadecenoate + H(+). The catalysed reaction is 1-octadecanoyl-2-(9Z,12Z-octadecadienoyl)-sn-glycero-3-phosphoserine + H2O = 1-octadecanoyl-sn-glycero-3-phosphoserine + (9Z,12Z)-octadecadienoate + H(+). The enzyme catalyses 1-heptadecanoyl-2-(5Z,8Z,11Z,14Z-eicosatetraenoyl)-sn-glycero-3-phosphocholine + H2O = 1-heptadecanoyl-sn-glycero-3-phosphocholine + (5Z,8Z,11Z,14Z)-eicosatetraenoate + H(+). It carries out the reaction 1-hexadecanoyl-2-(9Z-octadecenoyl)-sn-glycero-3-phosphoglycerol + H2O = 1-hexadecanoyl-sn-glycero-3-phosphoglycerol + (9Z)-octadecenoate + H(+). It catalyses the reaction 1-hexadecanoyl-2-(9Z-octadecenoyl)-sn-glycero-3-phospho-(1D-myo-inositol) + H2O = 1-hexadecanoyl-sn-glycero-3-phospho-(1D-myo-inositol) + (9Z)-octadecenoate + H(+). The catalysed reaction is 1-heptadecanoyl-2-(5Z,8Z,11Z,14Z-eicosatetraenoyl)-sn-glycero-3-phosphoethanolamine + H2O = 1-heptadecanoyl-sn-glycero-3-phosphoethanolamine + (5Z,8Z,11Z,14Z)-eicosatetraenoate + H(+). The enzyme catalyses 1-hexadecanoyl-2-(9Z-octadecenoyl)-sn-glycero-3-phospho-(1'-sn-glycerol) + H2O = 1-hexadecanoyl-sn-glycero-3-phospho-(1'-sn-glycerol) + (9Z)-octadecenoate + H(+). It carries out the reaction Hydrolyzes glycerol monoesters of long-chain fatty acids.. It catalyses the reaction 1-tetradecanoylglycerol + H2O = tetradecanoate + glycerol + H(+). The catalysed reaction is 2-hexadecanoylglycerol + H2O = glycerol + hexadecanoate + H(+). The enzyme catalyses 1-(9Z-octadecenoyl)-glycerol + H2O = glycerol + (9Z)-octadecenoate + H(+). It carries out the reaction 2-(9Z-octadecenoyl)-glycerol + H2O = glycerol + (9Z)-octadecenoate + H(+). It catalyses the reaction 2-(9Z,12Z-octadecadienoyl)-glycerol + H2O = (9Z,12Z)-octadecadienoate + glycerol + H(+). The catalysed reaction is 1-(5Z,8Z,11Z,14Z-eicosatetraenoyl)-glycerol + H2O = glycerol + (5Z,8Z,11Z,14Z)-eicosatetraenoate + H(+). The enzyme catalyses 2-(5Z,8Z,11Z,14Z-eicosatetraenoyl)-glycerol + H2O = glycerol + (5Z,8Z,11Z,14Z)-eicosatetraenoate + H(+). It carries out the reaction prostaglandin D2-1-glycerol ester + H2O = prostaglandin D2 + glycerol + H(+). It catalyses the reaction 2-glyceryl-15-deoxy-Delta(12,14)-prostaglandin J2 + H2O = 15-deoxy-Delta(12,14)-prostaglandin J2 + glycerol + H(+). The catalysed reaction is 1-(9Z,12Z-octadecadienoyl)-glycerol + H2O = (9Z,12Z)-octadecadienoate + glycerol + H(+). In terms of biological role, phosphatidylserine (PS) lipase that mediates the hydrolysis of phosphatidylserine to generate lysophosphatidylserine (LPS). LPS constitutes a class of signaling lipids that regulates immunological and neurological processes. Has no activity towards diacylglycerol, triacylglycerol or lysophosphatidylserine lipase. Also has monoacylglycerol lipase activity, with preference for 1-(9Z,12Z-octadecadienoyl)-glycerol (1-LG) and 2-glyceryl-15-deoxy-Delta(12,14)-prostaglandin J2 (15d-PGJ(2)-G). The chain is Phosphatidylserine lipase ABHD16A from Pongo abelii (Sumatran orangutan).